The primary structure comprises 1408 residues: MLTLLEPPGAKRSPTVGNYNNRSAQHLLNLAPEEDDLYETYEETEDYAENEPTGNILTRSFQFLDQYLVGQSSSADYNDRWKREFRARPSWCDADLCLQQMNRGKATGNRYALYSRSLIQKLLFALGNTVHRNAWSIILAVSMIFAVCCYGLQYVHIETDIVKLWVAQGGRLDEELNFLPNIKEAMRNVTGDSGPELPRENGLGGGYQVLIQTPEYEGQDALAAGPLLKHVEIMKHIASFNVSVHGVDWSLSDICFKPAPPSVAADSAASSLGDVIDKIVPCIWITPIDCFWEGSKALGPHPSLPKSSLGPLGMLLSSLSDGDMIRWSDFDPIAVIDEIHRSFNLGSHYTFFERAGVSHGYMDRPCIDPLDPECPPMAKNYFDVCPHIDRVREIAKKYGTELEEEKKKDSGYSFFDFLGRKKREAGDQPKMIHPAQPADSIPTIEDAVPAQVPVSTAPIPTTTTLSPEEARAAEEKEKKQKARELKDYCKSYRKSAFEWLKKNKDKWPEVMSENMYPQNVDYAAEMTGGCSGFASNVLNWPEDMILGNPRRAKKGGKLSGADALQSVFLVASPADVFLRFKQKPGRNSMKTGLDMDAWNETAAEQVLQAWQRNFTKSLYNHKANVDEDGNERRTLHPLASTSIADMLEEFCQFNYTIILAGYALMLAYAIVTQARFDNCLPATESSMGLALAGVLVVTFASVAGLGLATWFGIEFNAATTQIVPFLTLGIGVDNMFMLLHNYRDVVKLAGGHAEMAILMRETGMSILCTSINNILSFLTGTLLPIPALRSFCAQSSILLTFNFIAILTIYPAIISIDLRRKKAQRRDLVCCLYGDTREESYSMISKPKIQSKRIIGAPSEASIMQQFDGITQAQMASSDDPAPWSLHSFIRYYYIPFISKPASKVAIIVGCCALLGASFIGMRQSTLGLELGDVLPEHTAPAQFLRARDKYFSFYPMFAVIKGPNIDYAHQQRQIDNYRQSIGSSKYVIKNKNEEPSEKYWLGLMRDWLISIQRGFDEEVAKGSFNLTSGTVIGSNVSEDARLAHALMCSHGSLFGCAGRVGKIRLVDASGIINSDGFYNYLTAWFNVDHMMYYVSQASFFPTPPKWELSKNHTENFIPAAEPLAYSQIPFYLTGLTDTAVIVDAIKDIRSVCERFTDQGLPNFPQGIAFTFWEQYLFLTGNLMQAISIITISVFCVISVLLFNPWAALMVVCILGIMTCELAGFMGLVGIKLNPVSAVTLITAVGIGVEFTVHVVVSFLTALGTRSQRTSSAVDRVFVPVIHGSFSTLLGILMLGFSEFEFVVKYFFIVMTALICIGIINGLILLPVLLSWFGPRREISPTGGKTTLTLPPPLPKNANSSRSGGDDSDEDDEPSGLVMYSRQAPPTTRTSGGNRGTVGNNTRRLPAV.

A disordered region spans residues 1–20 (MLTLLEPPGAKRSPTVGNYN). Topologically, residues 1 to 136 (MLTLLEPPGA…GNTVHRNAWS (136 aa)) are cytoplasmic. A helical membrane pass occupies residues 137–157 (IILAVSMIFAVCCYGLQYVHI). Over 158 to 649 (ETDIVKLWVA…STSIADMLEE (492 aa)) the chain is Extracellular. The tract at residues 455–479 (STAPIPTTTTLSPEEARAAEEKEKK) is disordered. The segment covering 468–479 (EEARAAEEKEKK) has biased composition (basic and acidic residues). Residue asparagine 599 is glycosylated (N-linked (GlcNAc...) asparagine). A helical membrane pass occupies residues 650 to 670 (FCQFNYTIILAGYALMLAYAI). The SSD domain occupies 654–816 (NYTIILAGYA…LTIYPAIISI (163 aa)). Topologically, residues 671–686 (VTQARFDNCLPATESS) are cytoplasmic. Residues 687–707 (MGLALAGVLVVTFASVAGLGL) form a helical membrane-spanning segment. Residues 708–709 (AT) lie on the Extracellular side of the membrane. Residues 710-730 (WFGIEFNAATTQIVPFLTLGI) traverse the membrane as a helical segment. Residues 731 to 765 (GVDNMFMLLHNYRDVVKLAGGHAEMAILMRETGMS) lie on the Cytoplasmic side of the membrane. The chain crosses the membrane as a helical span at residues 766–786 (ILCTSINNILSFLTGTLLPIP). Residues 787–795 (ALRSFCAQS) are Extracellular-facing. The chain crosses the membrane as a helical span at residues 796–816 (SILLTFNFIAILTIYPAIISI). The Cytoplasmic segment spans residues 817-901 (DLRRKKAQRR…YYYIPFISKP (85 aa)). Residues 902-922 (ASKVAIIVGCCALLGASFIGM) traverse the membrane as a helical segment. The Extracellular segment spans residues 923 to 1175 (RQSTLGLELG…QGIAFTFWEQ (253 aa)). 2 N-linked (GlcNAc...) asparagine glycosylation sites follow: asparagine 1026 and asparagine 1036. The helical transmembrane segment at 1176-1196 (YLFLTGNLMQAISIITISVFC) threads the bilayer. Topologically, residues 1197-1217 (VISVLLFNPWAALMVVCILGI) are cytoplasmic. The next 2 membrane-spanning stretches (helical) occupy residues 1218–1238 (MTCELAGFMGLVGIKLNPVSA) and 1239–1259 (VTLITAVGIGVEFTVHVVVSF). Over 1260 to 1276 (LTALGTRSQRTSSAVDR) the chain is Extracellular. Residues 1277 to 1297 (VFVPVIHGSFSTLLGILMLGF) traverse the membrane as a helical segment. Over 1298-1305 (SEFEFVVK) the chain is Cytoplasmic. Residues 1306-1326 (YFFIVMTALICIGIINGLILL) traverse the membrane as a helical segment. The Extracellular segment spans residues 1327–1408 (PVLLSWFGPR…GNNTRRLPAV (82 aa)). Residues 1342–1408 (TGGKTTLTLP…GNNTRRLPAV (67 aa)) form a disordered region. Low complexity predominate over residues 1387–1408 (TTRTSGGNRGTVGNNTRRLPAV).

It belongs to the patched family. Germ line and its progenitors.

Its subcellular location is the membrane. Functionally, required but not essential for cytokinesis of mitotically proliferating germ cells. This chain is Protein patched homolog 1 (ptc-1), found in Caenorhabditis elegans.